The sequence spans 308 residues: GDP-L-colitose synthase (308 aa).

Residues 7–13 and 101–104 each bind NADP(+); these read GAGGMVG and LGSS. Catalysis depends on Tyr-132, which acts as the Proton donor/acceptor. NADP(+) contacts are provided by residues Lys-136, 160–163, and His-176; that span reads PCNL. Substrate contacts are provided by Lys-184, Trp-199, and Arg-206.

This sequence belongs to the NAD(P)-dependent epimerase/dehydratase family. Fucose synthase subfamily. As to quaternary structure, homodimer.

It catalyses the reaction GDP-beta-L-colitose + NAD(+) = GDP-4-dehydro-3,6-dideoxy-alpha-D-mannose + NADH + H(+). It carries out the reaction GDP-beta-L-colitose + NADP(+) = GDP-4-dehydro-3,6-dideoxy-alpha-D-mannose + NADPH + H(+). It participates in nucleotide-sugar metabolism; GDP-L-colitose biosynthesis. Functionally, involved in the biosynthesis of the L-colitose (3,6-dideoxyl-L-xylo-hexose) present in the O-antigen region of lipopolysaccharides (LPS) where it serves as antigenic determinant and are vital for bacterial defense and survival. Catalyzes the two-step NADP-dependent conversion of GDP-4-keto-3,6-dideoxy-D-mannose to GDP-L-colitose. ColC is a bifunctional enzyme catalyzing the C-5 epimerization of GDP-4-keto-3,6-dideoxy-D-mannose and the subsequent C-4 keto reduction of the resulting L-epimer to give GDP-L-colitose. It can use both NADP(+) and NAD(+) as electron acceptor, with a slight preference for NADP(+). The polypeptide is GDP-L-colitose synthase (Yersinia pseudotuberculosis).